Reading from the N-terminus, the 91-residue chain is Protein translocase subunit SecG (91 aa).

A run of 2 helical transmembrane segments spans residues 16 to 36 and 71 to 91; these read HTFLIVLLIIDCIALITVVLL and LTIILSILFFVLMICISYLGM.

The protein belongs to the SecG family. Component of the Sec protein translocase complex. Heterotrimer consisting of SecY, SecE and SecG subunits. The heterotrimers can form oligomers, although 1 heterotrimer is thought to be able to translocate proteins. Interacts with SecDF, and other proteins may be involved. The channel interacts with SecA via subunit SecY. Also part of the accessory SecA2/SecY2 protein translocation apparatus required to export cell wall protein GspB.

It is found in the cell membrane. In terms of biological role, subunit of the protein translocation channel SecYEG. While not essential, it considerably increases the export efficiency of extracellular proteins. This chain is Protein translocase subunit SecG, found in Staphylococcus aureus (strain NCTC 8325 / PS 47).